A 626-amino-acid polypeptide reads, in one-letter code: Chaperone protein HtpG (626 aa).

The a; substrate-binding stretch occupies residues 1–339; that stretch reads MSQNQETRGF…SNDLPLNVSR (339 aa). Residues 340-555 are b; that stretch reads EILQDNKITA…NDQMTTQMAK (216 aa). The segment at 556–626 is c; that stretch reads LFAAAGQPVP…FIKRINKLLG (71 aa).

This sequence belongs to the heat shock protein 90 family. In terms of assembly, homodimer.

Its subcellular location is the cytoplasm. Its function is as follows. Molecular chaperone. Has ATPase activity. This is Chaperone protein HtpG from Haemophilus influenzae (strain ATCC 51907 / DSM 11121 / KW20 / Rd).